We begin with the raw amino-acid sequence, 54 residues long: U-myrmicitoxin(01)-Tb5a (54 aa).

A signal peptide spans 1–26 (MQLSHLLLAFAMIFVMTIMYAPQVQA). A propeptide spanning residues 27 to 38 (DAWADANADADV) is cleaved from the precursor.

This sequence belongs to the formicidae venom precursor-01 superfamily. Contains 1 disulfide bond. As to expression, expressed by the venom gland.

Its subcellular location is the secreted. This is U-myrmicitoxin(01)-Tb5a from Tetramorium bicarinatum (Tramp ant).